Reading from the N-terminus, the 181-residue chain is Ferritin heavy chain (181 aa).

M1 is subject to N-acetylmethionine. Position 2 is an N-acetylthreonine; in Ferritin heavy chain, N-terminally processed (T2). The region spanning 11 to 160 is the Ferritin-like diiron domain; the sequence is QNYHQDSEAA…DHITNLRKMG (150 aa). Fe cation-binding residues include E28, E63, H66, E108, and Q142. Residue S179 is modified to Phosphoserine.

It belongs to the ferritin family. Oligomer of 24 subunits. There are two types of subunits: L (light) chain and H (heavy) chain. The major chain can be light or heavy, depending on the species and tissue type. The functional molecule forms a roughly spherical shell with a diameter of 12 nm and contains a central cavity into which the insoluble mineral iron core is deposited. Interacts with NCOA4; NCOA4 promotes targeting of the iron-binding ferritin complex to autolysosomes following starvation or iron depletion.

It localises to the cytoplasm. It is found in the lysosome. The protein resides in the cytoplasmic vesicle. Its subcellular location is the autophagosome. It carries out the reaction 4 Fe(2+) + O2 + 4 H(+) = 4 Fe(3+) + 2 H2O. Its function is as follows. Stores iron in a soluble, non-toxic, readily available form. Important for iron homeostasis. Has ferroxidase activity. Iron is taken up in the ferrous form and deposited as ferric hydroxides after oxidation. Also plays a role in delivery of iron to cells. Mediates iron uptake in capsule cells of the developing kidney. Delivery to lysosomes is mediated by the cargo receptor NCOA4 for autophagic degradation and release of iron. This is Ferritin heavy chain (FTH1) from Bos taurus (Bovine).